The sequence spans 675 residues: Serine/threonine-protein kinase ATG1 (675 aa).

In terms of domain architecture, Protein kinase spans 25–328 (FVIGGEIGKG…FEDFFNDPVV (304 aa)). ATP is bound by residues 31–39 (IGKGSFAQV) and lysine 54. The active-site Proton acceptor is the aspartate 168. The segment covering 339 to 374 (DIPKVEQKPSRDLRSLEADPQREQSELAKSPRERPL) has biased composition (basic and acidic residues). Disordered regions lie at residues 339–455 (DIPK…ERKL) and 501–577 (RLTS…TTRS). 3 stretches are compositionally biased toward polar residues: residues 390 to 399 (ANVSARTGQS), 516 to 538 (ATQQ…SAVQ), and 556 to 565 (ASRSLNTSSA).

It belongs to the protein kinase superfamily. Ser/Thr protein kinase family. APG1/unc-51/ULK1 subfamily. As to quaternary structure, homodimer. Forms a ternary complex with ATG13 and ATG17.

Its subcellular location is the cytoplasm. The protein localises to the preautophagosomal structure membrane. It catalyses the reaction L-seryl-[protein] + ATP = O-phospho-L-seryl-[protein] + ADP + H(+). The enzyme catalyses L-threonyl-[protein] + ATP = O-phospho-L-threonyl-[protein] + ADP + H(+). In terms of biological role, serine/threonine protein kinase involved in the cytoplasm to vacuole transport (Cvt) and found to be essential in autophagy, where it is required for the formation of autophagosomes. Involved in the clearance of protein aggregates which cannot be efficiently cleared by the proteasome. Required for selective autophagic degradation of the nucleus (nucleophagy) as well as for mitophagy which contributes to regulate mitochondrial quantity and quality by eliminating the mitochondria to a basal level to fulfill cellular energy requirements and preventing excess ROS production. Also involved in endoplasmic reticulum-specific autophagic process, in selective removal of ER-associated degradation (ERAD) substrates. Plays a key role in ATG9 and ATG23 cycling through the pre-autophagosomal structure and is necessary to promote ATG18 binding to ATG9 through phosphorylation of ATG9. Catalyzes phosphorylation of ATG4, decreasing the interaction between ATG4 and ATG8 and impairing deconjugation of PE-conjugated forms of ATG8. The chain is Serine/threonine-protein kinase ATG1 from Colletotrichum lindemuthianum (Bean anthracnose fungus).